The following is an 884-amino-acid chain: E3 ubiquitin-protein ligase BRE1-like 1 (884 aa).

Residues Met1–Ser37 form a disordered region. Residues Tyr49–Leu86 adopt a coiled-coil conformation. Positions Lys107–Thr127 are disordered. The segment covering Ser108 to Asn121 has biased composition (low complexity). Coiled coils occupy residues Leu216–Leu541, Ser580–Ile663, Arg696–Asp762, and Lys789–Arg827. The RING-type zinc finger occupies Cys832–Ser871.

The protein belongs to the BRE1 family. Interacts with SKIPA. Interacts with HUB2.

It localises to the nucleus. The enzyme catalyses S-ubiquitinyl-[E2 ubiquitin-conjugating enzyme]-L-cysteine + [acceptor protein]-L-lysine = [E2 ubiquitin-conjugating enzyme]-L-cysteine + N(6)-ubiquitinyl-[acceptor protein]-L-lysine.. It participates in protein modification; protein ubiquitination. In terms of biological role, E3 ubiquitin-protein ligase that monoubiquitinates H2B to form H2BK143ub1. H2BK143ub1 gives a specific tag for epigenetic transcriptional activation and is a prerequisite for H3 Lys-4 methylation (H3K4me). It thereby plays a central role in histone code and gene regulation. H2B monoubiquitination (H2BK143ub1), mediated by HUB1, modulates transcriptional regulation of anther development, likely by promoting histone H3K4 dimethylation (H3K4me2) in the chromatin of the key tapetum degradation-related genes C4, CP1 and UDT1. The chain is E3 ubiquitin-protein ligase BRE1-like 1 from Oryza sativa subsp. japonica (Rice).